The primary structure comprises 296 residues: Protoheme IX farnesyltransferase (296 aa).

Transmembrane regions (helical) follow at residues 13–33 (IIFGNLISVVGGFLLAAKGII), 35–55 (YPLFLATLVGVSLVVASGCVF), 84–104 (VTLIYATVLGIAGFVLLYIAA), 107–127 (LAMWLAVMGFVVYVGVYSLYM), 132–152 (VYGTLIGSLSGAAPPVIGYCA), 162–182 (LILLAIFSLWQMPHSYAIAIF), 208–228 (ITLYILAFMIATLMLALVGYA), 229–249 (GYKYLIVAAVVSIWWLGMALR), and 264–284 (FVFSIVAITSLSVMMSIDFSV).

It belongs to the UbiA prenyltransferase family. Protoheme IX farnesyltransferase subfamily.

Its subcellular location is the cell inner membrane. It catalyses the reaction heme b + (2E,6E)-farnesyl diphosphate + H2O = Fe(II)-heme o + diphosphate. The protein operates within porphyrin-containing compound metabolism; heme O biosynthesis; heme O from protoheme: step 1/1. Functionally, converts heme B (protoheme IX) to heme O by substitution of the vinyl group on carbon 2 of heme B porphyrin ring with a hydroxyethyl farnesyl side group. The protein is Protoheme IX farnesyltransferase of Edwardsiella ictaluri (strain 93-146).